A 174-amino-acid chain; its full sequence is Alpha-crystallin B chain (174 aa).

An N-acetylmethionine modification is found at M1. One can recognise a sHSP domain in the interval 55–163 (RMPSWLETGL…PERSIPITRE (109 aa)). Zn(2+) is bound by residues H82, H103, E105, and H110. The tract at residues 148 to 174 (RKQSDVPERSIPITREEKPAIAGAQRK) is disordered. Basic and acidic residues predominate over residues 149–166 (KQSDVPERSIPITREEKP).

The protein belongs to the small heat shock protein (HSP20) family. As to quaternary structure, heteromer composed of three CRYAA and one CRYAB subunits. Aggregates with homologous proteins, including the small heat shock protein HSPB1, to form large heteromeric complexes. Inter-subunit bridging via zinc ions enhances stability, which is crucial as there is no protein turn over in the lens. Lens as well as other tissues.

May contribute to the transparency and refractive index of the lens. This chain is Alpha-crystallin B chain (CRYAB), found in Anas platyrhynchos (Mallard).